The sequence spans 347 residues: Quinolinate synthase (347 aa).

The iminosuccinate site is built by histidine 47 and serine 68. A [4Fe-4S] cluster-binding site is contributed by cysteine 113. Iminosuccinate is bound by residues 139–141 (YAN) and serine 156. A [4Fe-4S] cluster-binding site is contributed by cysteine 200. Iminosuccinate contacts are provided by residues 226 to 228 (HPE) and threonine 243. Cysteine 297 contacts [4Fe-4S] cluster.

This sequence belongs to the quinolinate synthase family. Type 1 subfamily. [4Fe-4S] cluster is required as a cofactor.

The protein resides in the cytoplasm. The enzyme catalyses iminosuccinate + dihydroxyacetone phosphate = quinolinate + phosphate + 2 H2O + H(+). The protein operates within cofactor biosynthesis; NAD(+) biosynthesis; quinolinate from iminoaspartate: step 1/1. Catalyzes the condensation of iminoaspartate with dihydroxyacetone phosphate to form quinolinate. The chain is Quinolinate synthase from Escherichia fergusonii (strain ATCC 35469 / DSM 13698 / CCUG 18766 / IAM 14443 / JCM 21226 / LMG 7866 / NBRC 102419 / NCTC 12128 / CDC 0568-73).